We begin with the raw amino-acid sequence, 397 residues long: MSPLLPSFPFAVLALADGSIFHGFSIGAPGETTGEVVFNTALTGYQEIITDPSYCSQIVTLTYPHIGNVGVNAQDAESDRIHAAGLVIKDLPKRVSNFRSEAPLDAYLTEAGVVGIAGIDTRKLTRILRDKGAQSGAIVAGKAGDDYETLGKKALELVKAFPGMAGLDLAKVVTTKKPYEWREGEWDLHGPNGTPAYRTLDTSKPTYKVVAYDFGVKRNILRMLTERGCELTVVPAQTSAAEVLAMQPDGVFLSNGPGDPEPCDYAIAAAKEIIEAGVPTFGICLGHQIMGLAAGAKTLKMKFGHHGANHPVKDLDTGRVAITSQNHGFAVDASTLPANVRVTHVSLFDGSLQGLAWKDKPAICFQGHPEASPGPHDVSYLFDRFMELMNAAKKEGK.

Residues 1–204 form a CPSase region; that stretch reads MSPLLPSFPF…PAYRTLDTSK (204 aa). L-glutamine is bound by residues Ser53, Gly256, and Gly258. Residues 208 to 395 form the Glutamine amidotransferase type-1 domain; it reads KVVAYDFGVK…MELMNAAKKE (188 aa). Residue Cys284 is the Nucleophile of the active site. Leu285, Gln288, Asn326, Gly328, and Phe329 together coordinate L-glutamine. Active-site residues include His368 and Glu370.

The protein belongs to the CarA family. Composed of two chains; the small (or glutamine) chain promotes the hydrolysis of glutamine to ammonia, which is used by the large (or ammonia) chain to synthesize carbamoyl phosphate. Tetramer of heterodimers (alpha,beta)4.

It carries out the reaction hydrogencarbonate + L-glutamine + 2 ATP + H2O = carbamoyl phosphate + L-glutamate + 2 ADP + phosphate + 2 H(+). The catalysed reaction is L-glutamine + H2O = L-glutamate + NH4(+). The protein operates within amino-acid biosynthesis; L-arginine biosynthesis; carbamoyl phosphate from bicarbonate: step 1/1. It participates in pyrimidine metabolism; UMP biosynthesis via de novo pathway; (S)-dihydroorotate from bicarbonate: step 1/3. Functionally, small subunit of the glutamine-dependent carbamoyl phosphate synthetase (CPSase). CPSase catalyzes the formation of carbamoyl phosphate from the ammonia moiety of glutamine, carbonate, and phosphate donated by ATP, constituting the first step of 2 biosynthetic pathways, one leading to arginine and/or urea and the other to pyrimidine nucleotides. The small subunit (glutamine amidotransferase) binds and cleaves glutamine to supply the large subunit with the substrate ammonia. The protein is Carbamoyl phosphate synthase small chain of Polynucleobacter asymbioticus (strain DSM 18221 / CIP 109841 / QLW-P1DMWA-1) (Polynucleobacter necessarius subsp. asymbioticus).